The following is an 888-amino-acid chain: E3 ubiquitin-protein ligase SH3RF1 (888 aa).

The RING-type zinc finger occupies 12-53 (CPVCLERLDASAKVLPCQHTFCKRCLLGIVGSRNELRCPECR). Positions 108 to 127 (SSKDLQSSQGGQQPRVQSWS) are enriched in polar residues. Residues 108-128 (SSKDLQSSQGGQQPRVQSWSP) form a disordered region. 2 consecutive SH3 domains span residues 134–193 (PQLP…IIKP) and 196–259 (QPPP…FNSA). The tract at residues 275–321 (DAGECSSAAAQSSTAPKHSDTKKNTKKRHSFTSLTMANKSSQASQNR) is disordered. Residues 292–362 (HSDTKKNTKK…APSQVHISTT (71 aa)) are interaction with RAC1. Ser-304 carries the phosphoserine modification. The span at 305–321 (FTSLTMANKSSQASQNR) shows a compositional bias: polar residues. The interval 440–543 (HLRPQTRPSV…STAGGPAQKL (104 aa)) is interaction with AKT2. One can recognise an SH3 3 domain in the interval 445–506 (TRPSVYVAIY…PGNYVAPVTR (62 aa)). 3 disordered regions span residues 516 to 548 (VPMS…GNGV), 620 to 639 (SVGL…LMPG), and 684 to 741 (TVLP…ASPT). Polar residues predominate over residues 520 to 535 (TAGQTSRGVTMVSPST). Position 532 is a phosphoserine (Ser-532). The segment covering 692–704 (SPDSASSACGNSS) has biased composition (polar residues). Residues 707 to 718 (KPDKDSKKEKKG) show a composition bias toward basic and acidic residues. Position 735 is a phosphoserine (Ser-735). One can recognise an SH3 4 domain in the interval 829-888 (VVCERHRVVVSYPPQSEAELELKEGDIVFVHKKREDGWFKGTLQRNGKTGLFPGSFVENI).

The protein belongs to the SH3RF family. In terms of assembly, interacts with RAC1; in a GTP-dependent manner. Interacts with MAP3K10/MLK2 and MAP3K11/MLK3. Interacts with MAPK8IP; this interaction leads to the PJAC complex (POSH-JIP or SH3RF1/MAPK8IP apoptotic complex) with a 1:1 ratio. Interacts with SIAH1. Interacts with HERP1. Probably part of a signaling complex that may contain SH3RF1, MAPK8IP, DLK1, MAP2K4/MKK4, MAP2K7/MKK7, MAPK8/JNK1, MAPK9/JNK2, AKT1 and AKT2. Found in a complex with RAC2, MAP3K7/TAK1, MAP2K7/MKK7, MAPK8IP1/JIP1, MAPK8/JNK1 and MAPK9/JNK2. Found in a complex with RAC1, MAP3K11/MLK3, MAP2K7/MKK7, MAPK8IP1/JIP1 and MAPK8/JNK1. Interacts with SH3RF2. Phosphorylated at Ser-304 by AKT1 and AKT2. When phosphorylated, it has reduced ability to bind Rac. In terms of processing, autoubiquitinated. Ubiquitinated by SH3RF2, leading to proteasome-mediated degradation.

It is found in the cytoplasm. The protein localises to the perinuclear region. The protein resides in the cell projection. It localises to the lamellipodium. Its subcellular location is the golgi apparatus. It is found in the trans-Golgi network. It carries out the reaction S-ubiquitinyl-[E2 ubiquitin-conjugating enzyme]-L-cysteine + [acceptor protein]-L-lysine = [E2 ubiquitin-conjugating enzyme]-L-cysteine + N(6)-ubiquitinyl-[acceptor protein]-L-lysine.. The protein operates within protein modification; protein ubiquitination. Has E3 ubiquitin-protein ligase activity. In the absence of an external substrate, it can catalyze self-ubiquitination. Stimulates ubiquitination of potassium channel KCNJ1, enhancing it's dynamin-dependent and clathrin-independent endocytosis. Acts as a scaffold protein that coordinates with MAPK8IP1/JIP1 in organizing different components of the JNK pathway, including RAC1 or RAC2, MAP3K11/MLK3 or MAP3K7/TAK1, MAP2K7/MKK7, MAPK8/JNK1 and/or MAPK9/JNK2 into a functional multiprotein complex to ensure the effective activation of the JNK signaling pathway. Regulates the differentiation of CD4(+) and CD8(+) T-cells and promotes T-helper 1 (Th1) cell differentiation. Regulates the activation of MAPK8/JNK1 and MAPK9/JNK2 in CD4(+) T-cells and the activation of MAPK8/JNK1 in CD8(+) T-cells. Plays a crucial role in the migration of neocortical neurons in the developing brain. Controls proper cortical neuronal migration and the formation of proximal cytoplasmic dilation in the leading process (PCDLP) in migratory neocortical neurons by regulating the proper localization of activated RAC1 and F-actin assembly. Its function is as follows. (Microbial infection) Plays an essential role in the targeting of HIV-1 Gag to the plasma membrane, this function is dependent on it's RING domain, and hence it's E3 ligase activity. The protein is E3 ubiquitin-protein ligase SH3RF1 (SH3RF1) of Homo sapiens (Human).